We begin with the raw amino-acid sequence, 298 residues long: Protoheme IX farnesyltransferase (298 aa).

The next 9 helical transmembrane spans lie at 29–49 (LIVF…PPLL), 51–71 (FGVA…LNCL), 97–117 (ETVT…HGFI), 120–140 (LTMW…TLIL), 148–168 (IVIG…AMTG), 175–195 (LVLF…LACY), 221–241 (ILWY…LGMS), 243–263 (GFYL…AIAL), and 278–298 (YSIL…LIVL).

This sequence belongs to the UbiA prenyltransferase family. Protoheme IX farnesyltransferase subfamily.

It localises to the cell inner membrane. The enzyme catalyses heme b + (2E,6E)-farnesyl diphosphate + H2O = Fe(II)-heme o + diphosphate. The protein operates within porphyrin-containing compound metabolism; heme O biosynthesis; heme O from protoheme: step 1/1. Converts heme B (protoheme IX) to heme O by substitution of the vinyl group on carbon 2 of heme B porphyrin ring with a hydroxyethyl farnesyl side group. The protein is Protoheme IX farnesyltransferase of Dechloromonas aromatica (strain RCB).